A 551-amino-acid chain; its full sequence is CTP synthase (551 aa).

Positions 1–265 (MTRYLFITGG…DHIVAEKWGL (265 aa)) are amidoligase domain. CTP is bound at residue serine 13. A UTP-binding site is contributed by serine 13. ATP contacts are provided by residues 14–19 (SLGKGI) and aspartate 71. Aspartate 71 and glutamate 139 together coordinate Mg(2+). CTP contacts are provided by residues 146-148 (DIE), 186-191 (KTKPTQ), and lysine 222. UTP contacts are provided by residues 186–191 (KTKPTQ) and lysine 222. The region spanning 290–541 (TVAMVGKYVD…LRAAIAHRDG (252 aa)) is the Glutamine amidotransferase type-1 domain. Glycine 351 is an L-glutamine binding site. The active-site Nucleophile; for glutamine hydrolysis is the cysteine 378. L-glutamine is bound by residues 379–382 (LGMQ), glutamate 402, and arginine 469. Active-site residues include histidine 514 and glutamate 516.

It belongs to the CTP synthase family. As to quaternary structure, homotetramer.

The enzyme catalyses UTP + L-glutamine + ATP + H2O = CTP + L-glutamate + ADP + phosphate + 2 H(+). It carries out the reaction L-glutamine + H2O = L-glutamate + NH4(+). It catalyses the reaction UTP + NH4(+) + ATP = CTP + ADP + phosphate + 2 H(+). Its pathway is pyrimidine metabolism; CTP biosynthesis via de novo pathway; CTP from UDP: step 2/2. With respect to regulation, allosterically activated by GTP, when glutamine is the substrate; GTP has no effect on the reaction when ammonia is the substrate. The allosteric effector GTP functions by stabilizing the protein conformation that binds the tetrahedral intermediate(s) formed during glutamine hydrolysis. Inhibited by the product CTP, via allosteric rather than competitive inhibition. Functionally, catalyzes the ATP-dependent amination of UTP to CTP with either L-glutamine or ammonia as the source of nitrogen. Regulates intracellular CTP levels through interactions with the four ribonucleotide triphosphates. The protein is CTP synthase of Halorhodospira halophila (strain DSM 244 / SL1) (Ectothiorhodospira halophila (strain DSM 244 / SL1)).